A 305-amino-acid chain; its full sequence is Dihydroorotate dehydrogenase B (NAD(+)), catalytic subunit (305 aa).

Residues Ser20 and 44–45 (KG) each bind FMN. Substrate is bound by residues Lys44 and 68–72 (NAIGI). Residues Asn98 and Asn126 each contribute to the FMN site. Asn126 is a binding site for substrate. Cys129 functions as the Nucleophile in the catalytic mechanism. Residues Lys165 and Ile191 each coordinate FMN. 192–193 (NT) is a substrate binding site. Residues Gly217, 243–244 (GG), and 265–266 (GT) each bind FMN.

Belongs to the dihydroorotate dehydrogenase family. Type 1 subfamily. Heterotetramer of 2 PyrK and 2 PyrD type B subunits. The cofactor is FMN.

It is found in the cytoplasm. It catalyses the reaction (S)-dihydroorotate + NAD(+) = orotate + NADH + H(+). Its pathway is pyrimidine metabolism; UMP biosynthesis via de novo pathway; orotate from (S)-dihydroorotate (NAD(+) route): step 1/1. Catalyzes the conversion of dihydroorotate to orotate with NAD(+) as electron acceptor. The polypeptide is Dihydroorotate dehydrogenase B (NAD(+)), catalytic subunit (pyrD) (Maridesulfovibrio salexigens (strain ATCC 14822 / DSM 2638 / NCIMB 8403 / VKM B-1763) (Desulfovibrio salexigens)).